We begin with the raw amino-acid sequence, 483 residues long: Islet cell autoantigen 1 (483 aa).

Positions 51-254 (ASDADLDAKL…TSHTMAAIHE (204 aa)) constitute an AH domain. Residues 281-321 (EEKKKINQQESTDAAVQEPSQLISLEEENQRKESSSFKTED) form a disordered region. The segment covering 288-303 (QQESTDAAVQEPSQLI) has biased composition (polar residues). The segment covering 308–321 (ENQRKESSSFKTED) has biased composition (basic and acidic residues).

As to expression, expressed abundantly in pancreas, heart and brain with low levels of expression in lung, kidney, liver and thyroid.

It localises to the cytoplasm. The protein localises to the cytosol. Its subcellular location is the golgi apparatus membrane. It is found in the cytoplasmic vesicle. The protein resides in the secretory vesicle membrane. It localises to the secretory vesicle. The protein localises to the synaptic vesicle membrane. In terms of biological role, may play a role in neurotransmitter secretion. This is Islet cell autoantigen 1 (ICA1) from Homo sapiens (Human).